We begin with the raw amino-acid sequence, 377 residues long: Actin-related protein T2 (377 aa).

Belongs to the actin family.

The protein resides in the cytoplasm. It is found in the cytoskeleton. This Bos taurus (Bovine) protein is Actin-related protein T2 (ACTRT2).